A 449-amino-acid chain; its full sequence is Trigger factor (449 aa).

In terms of domain architecture, PPIase FKBP-type spans 162–242 (GDFVTIDMTV…VRAVREKQVP (81 aa)). A disordered region spans residues 428 to 449 (APVNLEGGSTPAAEAEPAVSEA). A compositionally biased stretch (low complexity) spans 438 to 449 (PAAEAEPAVSEA).

It belongs to the FKBP-type PPIase family. Tig subfamily.

The protein resides in the cytoplasm. It carries out the reaction [protein]-peptidylproline (omega=180) = [protein]-peptidylproline (omega=0). In terms of biological role, involved in protein export. Acts as a chaperone by maintaining the newly synthesized protein in an open conformation. Functions as a peptidyl-prolyl cis-trans isomerase. The polypeptide is Trigger factor (Acidothermus cellulolyticus (strain ATCC 43068 / DSM 8971 / 11B)).